The sequence spans 481 residues: Glutamyl-tRNA(Gln) amidotransferase subunit A (481 aa).

Active-site charge relay system residues include lysine 78 and serine 153. Serine 177 (acyl-ester intermediate) is an active-site residue.

The protein belongs to the amidase family. GatA subfamily. Heterotrimer of A, B and C subunits.

It catalyses the reaction L-glutamyl-tRNA(Gln) + L-glutamine + ATP + H2O = L-glutaminyl-tRNA(Gln) + L-glutamate + ADP + phosphate + H(+). Allows the formation of correctly charged Gln-tRNA(Gln) through the transamidation of misacylated Glu-tRNA(Gln) in organisms which lack glutaminyl-tRNA synthetase. The reaction takes place in the presence of glutamine and ATP through an activated gamma-phospho-Glu-tRNA(Gln). The protein is Glutamyl-tRNA(Gln) amidotransferase subunit A of Borrelia garinii subsp. bavariensis (strain ATCC BAA-2496 / DSM 23469 / PBi) (Borreliella bavariensis).